The sequence spans 264 residues: Hydroxyethylthiazole kinase (264 aa).

Position 43 (Met43) interacts with substrate. Positions 119 and 165 each coordinate ATP. Gly192 is a substrate binding site.

Belongs to the Thz kinase family. Requires Mg(2+) as cofactor.

It catalyses the reaction 5-(2-hydroxyethyl)-4-methylthiazole + ATP = 4-methyl-5-(2-phosphooxyethyl)-thiazole + ADP + H(+). The protein operates within cofactor biosynthesis; thiamine diphosphate biosynthesis; 4-methyl-5-(2-phosphoethyl)-thiazole from 5-(2-hydroxyethyl)-4-methylthiazole: step 1/1. In terms of biological role, catalyzes the phosphorylation of the hydroxyl group of 4-methyl-5-beta-hydroxyethylthiazole (THZ). This chain is Hydroxyethylthiazole kinase, found in Anoxybacillus flavithermus (strain DSM 21510 / WK1).